A 210-amino-acid chain; its full sequence is Ras-related protein Rab-43 (210 aa).

23–30 (GDASVGKT) lines the GTP pocket. An Effector region motif is present at residues 45 to 53 (QGSTIGVDF). Ser47 bears the Phosphoserine mark. 71–75 (DTAGQ) contributes to the GTP binding site. Position 80 is a phosphothreonine (Thr80). GTP is bound by residues 129 to 132 (NKSD) and 161 to 162 (AK). S-geranylgeranyl cysteine attachment occurs at residues Cys208 and Cys210. Cys210 is modified (cysteine methyl ester).

The protein belongs to the small GTPase superfamily. Rab family. In terms of assembly, interacts with GDI1, GDI2 and CHM; phosphorylation at Thr-80 disrupts these interactions.

It is found in the cytoplasmic vesicle. It localises to the phagosome. The protein localises to the phagosome membrane. The protein resides in the golgi apparatus. Its subcellular location is the trans-Golgi network membrane. It is found in the trans-Golgi network. Its function is as follows. The small GTPases Rab are key regulators of intracellular membrane trafficking, from the formation of transport vesicles to their fusion with membranes. Rabs cycle between an inactive GDP-bound form and an active GTP-bound form that is able to recruit to membranes different set of downstream effectors directly responsible for vesicle formation, movement, tethering and fusion. The low intrinsic GTPase activity of RAB43 is activated by USP6NL. Involved in retrograde transport from the endocytic pathway to the Golgi apparatus. Involved in the transport of Shiga toxin from early and recycling endosomes to the trans-Golgi network. Required for the structural integrity of the Golgi complex. Plays a role in the maturation of phagosomes that engulf pathogens, such as S.aureus and Mycobacterium. The chain is Ras-related protein Rab-43 (Rab43) from Rattus norvegicus (Rat).